A 127-amino-acid polypeptide reads, in one-letter code: Large ribosomal subunit protein bL20 (127 aa).

The protein belongs to the bacterial ribosomal protein bL20 family.

Its function is as follows. Binds directly to 23S ribosomal RNA and is necessary for the in vitro assembly process of the 50S ribosomal subunit. It is not involved in the protein synthesizing functions of that subunit. This is Large ribosomal subunit protein bL20 from Bifidobacterium longum (strain DJO10A).